Reading from the N-terminus, the 152-residue chain is Transcriptional regulator MraZ (152 aa).

SpoVT-AbrB domains follow at residues 5 to 52 (ASAI…PLHE) and 81 to 124 (AHEV…DEQA).

It belongs to the MraZ family. In terms of assembly, forms oligomers.

The protein localises to the cytoplasm. Its subcellular location is the nucleoid. The chain is Transcriptional regulator MraZ from Shewanella sp. (strain MR-7).